An 872-amino-acid chain; its full sequence is Alanine--tRNA ligase (872 aa).

4 residues coordinate Zn(2+): His-567, His-571, Cys-669, and His-673.

It belongs to the class-II aminoacyl-tRNA synthetase family. Zn(2+) is required as a cofactor.

It localises to the cytoplasm. It carries out the reaction tRNA(Ala) + L-alanine + ATP = L-alanyl-tRNA(Ala) + AMP + diphosphate. In terms of biological role, catalyzes the attachment of alanine to tRNA(Ala) in a two-step reaction: alanine is first activated by ATP to form Ala-AMP and then transferred to the acceptor end of tRNA(Ala). Also edits incorrectly charged Ser-tRNA(Ala) and Gly-tRNA(Ala) via its editing domain. This chain is Alanine--tRNA ligase, found in Streptococcus pyogenes serotype M4 (strain MGAS10750).